Consider the following 162-residue polypeptide: Ribosome maturation factor RimP (162 aa).

This sequence belongs to the RimP family.

It localises to the cytoplasm. Functionally, required for maturation of 30S ribosomal subunits. The sequence is that of Ribosome maturation factor RimP from Cupriavidus pinatubonensis (strain JMP 134 / LMG 1197) (Cupriavidus necator (strain JMP 134)).